A 90-amino-acid chain; its full sequence is Conotoxin Rg9.1 (90 aa).

Positions 1 to 20 (MHLSLARSAVLILLLLFALG) are cleaved as a signal peptide. The propeptide occupies 21 to 60 (NFVGVQPGQITRDADHGINLRSLRKQMSRSPLVKGAFCGQ). 3 disulfides stabilise this stretch: Cys-58-Cys-71, Cys-62-Cys-73, and Cys-67-Cys-80.

Belongs to the conotoxin P superfamily. In terms of tissue distribution, expressed by the venom duct.

It is found in the secreted. Probable neurotoxin that inhibits ion channels. This Conus regius (Crown cone) protein is Conotoxin Rg9.1.